Consider the following 130-residue polypeptide: Ribonuclease P protein component 2 (130 aa).

Belongs to the eukaryotic/archaeal RNase P protein component 2 family. In terms of assembly, consists of a catalytic RNA component and at least 4-5 protein subunits.

It is found in the cytoplasm. It carries out the reaction Endonucleolytic cleavage of RNA, removing 5'-extranucleotides from tRNA precursor.. Its function is as follows. Part of ribonuclease P, a protein complex that generates mature tRNA molecules by cleaving their 5'-ends. In Methanococcus maripaludis (strain C7 / ATCC BAA-1331), this protein is Ribonuclease P protein component 2.